Consider the following 218-residue polypeptide: Replication protein RepB (218 aa).

The segment at 1-26 is disordered; that stretch reads MKSESKIDWTVPRPNKNPKTKQPYKR. The span at 16 to 26 shows a compositional bias: basic residues; it reads KNPKTKQPYKR.

This sequence belongs to the Gram-positive plasmids replication protein type 2 family.

Is essential for plasmid replication. Nicks the positive strand at the plus origin of replication. The chain is Replication protein RepB (repB) from Lactiplantibacillus plantarum (Lactobacillus plantarum).